Reading from the N-terminus, the 742-residue chain is 5-methyltetrahydropteroyltriglutamate--homocysteine methyltransferase (742 aa).

5-methyltetrahydropteroyltri-L-glutamate-binding positions include 18 to 21 (REWK) and Lys-112. L-homocysteine is bound by residues 420–422 (IGS) and Glu-473. L-methionine is bound by residues 420-422 (IGS) and Glu-473. Trp-550 is a 5-methyltetrahydropteroyltri-L-glutamate binding site. Position 588 (Asp-588) interacts with L-homocysteine. Asp-588 lines the L-methionine pocket. Glu-594 contributes to the 5-methyltetrahydropteroyltri-L-glutamate binding site. Zn(2+) contacts are provided by His-630, Cys-632, and Glu-654. Residue His-683 is the Proton donor of the active site. Zn(2+) is bound at residue Cys-715.

The protein belongs to the vitamin-B12 independent methionine synthase family. Zn(2+) is required as a cofactor.

It catalyses the reaction 5-methyltetrahydropteroyltri-L-glutamate + L-homocysteine = tetrahydropteroyltri-L-glutamate + L-methionine. The protein operates within amino-acid biosynthesis; L-methionine biosynthesis via de novo pathway; L-methionine from L-homocysteine (MetE route): step 1/1. In terms of biological role, catalyzes the transfer of a methyl group from 5-methyltetrahydrofolate to homocysteine resulting in methionine formation. The polypeptide is 5-methyltetrahydropteroyltriglutamate--homocysteine methyltransferase (Staphylococcus aureus (strain bovine RF122 / ET3-1)).